Reading from the N-terminus, the 278-residue chain is SLAM family member 8 (278 aa).

Residues 1 to 20 (MWSLWSLLLFEALLPVVVVS) form the signal peptide. The Extracellular segment spans residues 21–231 (VQVLSKVGDS…AASGKASYKD (211 aa)). Residues Asn-83 and Asn-154 are each glycosylated (N-linked (GlcNAc...) asparagine). One can recognise an Ig-like C2-type domain in the interval 126 to 213 (PEVQVFTAAA…PVSWDMTTVT (88 aa)). The cysteines at positions 150 and 199 are disulfide-linked. A helical transmembrane segment spans residues 232-252 (VLLVVVPITLFLILAGLFGAW). Residues 253-278 (HHGLCSGKKKDACTDGVLPETENALV) are Cytoplasmic-facing.

It is found in the membrane. In terms of biological role, may play a role in B-lineage commitment and/or modulation of signaling through the B-cell receptor. The sequence is that of SLAM family member 8 (Slamf8) from Mus musculus (Mouse).